Reading from the N-terminus, the 641-residue chain is Bifunctional protein glk (641 aa).

The interval 1 to 340 (MSTGAQTKAA…QLSNRTGGAS (340 aa)) is glucokinase. 23–28 (ADVGGT) is a binding site for ATP. Positions 341–417 (SAVFERIRQM…LKLATGLTGT (77 aa)) constitute an HTH rpiR-type domain. The putative HTH-type transcriptional regulator stretch occupies residues 341–641 (SAVFERIRQM…SHGAAPAAKD (301 aa)). The H-T-H motif DNA-binding region spans 377–396 (IVDIARKADVSQPTVIRFCR). The 140-residue stretch at 461–600 (AIDILNNARR…AVGVAIRRAA (140 aa)) folds into the SIS domain. Residues 576–596 (SMISRILHLVMIDILAVGVAI) traverse the membrane as a helical segment.

This sequence in the N-terminal section; belongs to the bacterial glucokinase family.

The protein localises to the membrane. The catalysed reaction is D-glucose + ATP = D-glucose 6-phosphate + ADP + H(+). The protein is Bifunctional protein glk (glk) of Burkholderia pseudomallei (strain 1710b).